Reading from the N-terminus, the 343-residue chain is MSNAMAASAVPDDTAYPRLLADVGGTNVRFALETAPMQIGAVTALKVADHPSLEAAMRHYRDALSASGAKLPRHAAIGLANPVTGDHVRLTNHDWAFSIEATRQALGLQTLVAINDFTSLALGLPYLGANDLVQIRSGQAVATAPRALIGPGTGLGVSGLVPAPGGGAVALAGEGGHIELMPVTDDEWIAWRATHASLGRVSAERLLSGMGLSQIHAALSAETGTRVDVPLTPEQVTTGAFARHDPLCERTMAVFFGLLGSVAADIALVMGALGGVYLGGGILPRFVPALQASAFNARFVAKGRMRGYLDKLPVYVITASYPALPGLARALADTLSHGRPHIG.

21–26 provides a ligand contact to ATP; sequence ADVGGT.

This sequence belongs to the bacterial glucokinase family.

It localises to the cytoplasm. The enzyme catalyses D-glucose + ATP = D-glucose 6-phosphate + ADP + H(+). This is Glucokinase from Cupriavidus pinatubonensis (strain JMP 134 / LMG 1197) (Cupriavidus necator (strain JMP 134)).